Here is a 2439-residue protein sequence, read N- to C-terminus: Mucin-6 (2439 aa).

The N-terminal stretch at 1–22 (MVQRWLLLSCCGALLSAGLANT) is a signal peptide. The VWFD 1 domain maps to 43–214 (GQCSTWGAGH…KLDDPGEICT (172 aa)). Disulfide bonds link Cys-45–Cys-176 and Cys-67–Cys-213. N-linked (GlcNAc...) asparagine glycosylation is present at Asn-268. Residues 302-357 (CPANQVYQECGSACVKTCSNPQHSCSSSCTFGCFCPEGTVLNDLSNNHTCVPVTQC) form the TIL domain. One can recognise a VWFD 2 domain in the interval 395-579 (GHCSLEGGSF…ALERETDPCS (185 aa)). Cystine bridges form between Cys-397-Cys-533 and Cys-419-Cys-578. Asn-486 and Asn-659 each carry an N-linked (GlcNAc...) asparagine glycan. Residues 866 to 1038 (STCTLYGEGH…NSWKESPLCG (173 aa)) enclose the VWFD 3 domain. Cystine bridges form between Cys-868-Cys-1002, Cys-890-Cys-1037, Cys-899-Cys-999, and Cys-917-Cys-924. 2 N-linked (GlcNAc...) asparagine glycosylation sites follow: Asn-975 and Asn-1179. Disordered stretches follow at residues 1202 to 1455 (PQPP…TSLV), 1471 to 1626 (ATSA…LVTP), 1642 to 1834 (SASI…HPHT), 1868 to 1983 (SIHS…STGP), 2033 to 2077 (ATSA…THSS), 2090 to 2196 (SSSW…SASP), 2233 to 2278 (VSPT…SLTT), and 2323 to 2348 (LTAH…SPGV). Residues 1224 to 1265 (TGTSTTIGLLSSTGPSPSSNHTPASPTQTPLLPATLTSSKPT) show a composition bias toward low complexity. The segment covering 1276–1286 (TAVTPQATSGL) has biased composition (polar residues). Low complexity predominate over residues 1294 to 1339 (STATKPTVTQATTRATASTASPATTSTAQSTTRTTMTLPTPATSGT). The segment covering 1340–1351 (SPTLPKSTNQEL) has biased composition (polar residues). Composition is skewed to low complexity over residues 1352-1373 (PGTT…TGPT) and 1381-1415 (TRPT…AGSP). Polar residues-rich tracts occupy residues 1416-1455 (VPST…TSLV), 1471-1481 (ATSASNHSAPT), and 1490-1520 (LKAT…STNK). 2 stretches are compositionally biased toward low complexity: residues 1521–1567 (TPTS…ATSS) and 1574–1611 (TTHS…PQTT). The 1; truncated repeat unit spans residues 1561-1738 (TNSATSSRPP…TTSGTSQSRS (178 aa)). Residues 1607-1953 (HPQTTLPTHV…STGTRTPVAH (347 aa)) form an approximate repeats region. The segment covering 1659 to 1686 (LKATGSTHTAPTMTLTTSGTSQALSSLN) has biased composition (polar residues). Low complexity predominate over residues 1687-1768 (TAKTSTSLHS…PEVTSTSTTS (82 aa)). The span at 1769–1793 (ITPNHTSTGTRTPVAHTTSATSSRL) shows a compositional bias: polar residues. Repeat 2 spans residues 1785–1953 (TTSATSSRLP…STGTRTPVAH (169 aa)). 2 stretches are compositionally biased toward low complexity: residues 1794-1834 (PTPF…HPHT) and 1891-1917 (TAPP…TSTS). Polar residues predominate over residues 1918 to 1962 (LPYHTSSTHHPEVTPTSTTNITPKHTSTGTRTPVAHTTSASSSRL). Positions 1963–1983 (PTPFTTHSPPTGSSPFSSTGP) are enriched in low complexity. A compositionally biased stretch (polar residues) spans 2052–2070 (LKATGSTHTAPPMTVTTSG). Over residues 2090–2102 (SSSWLPQNSSSRP) the composition is skewed to low complexity. Residues 2107-2120 (ITTQLPHLSSATTP) are compositionally biased toward polar residues. Residues 2121–2196 (VSTTNQLSSS…PTTASVSASP (76 aa)) show a composition bias toward low complexity. A compositionally biased stretch (polar residues) spans 2240-2264 (HLASSTIAFPSTPRTTASTHTAPAF). Low complexity predominate over residues 2265-2278 (SSQSTTSRSTSLTT). Positions 2323–2347 (LTAHGSTPASAPVSSLGTPTPTSPG) are enriched in polar residues. Disulfide bonds link Cys-2349/Cys-2396, Cys-2363/Cys-2410, Cys-2372/Cys-2430, and Cys-2376/Cys-2432. A CTCK domain is found at 2349 to 2438 (CSVREQQEEI…HCVCSSVACG (90 aa)).

Multimer; disulfide-linked. Post-translationally, O-glycosylated. In terms of tissue distribution, expressed in the regenerative zone of gastric antrum, gastric body mucosa and gastric incisura mucosa. Expressed in the deeper mucous glands of gastric antrum. Overexpressed in Helicobacter pylori infected gastric epithelium. Highly expressed in duodenal Brunner's glands, gall bladder, seminal vesicle, pancreatic centroacinar cells and ducts, and periductal glands of the common bile duct.

The protein localises to the secreted. Functionally, may provide a mechanism for modulation of the composition of the protective mucus layer related to acid secretion or the presence of bacteria and noxious agents in the lumen. Plays an important role in the cytoprotection of epithelial surfaces and are used as tumor markers in a variety of cancers. May play a role in epithelial organogenesis. This chain is Mucin-6 (MUC6), found in Homo sapiens (Human).